The primary structure comprises 222 residues: Tegument protein UL26 (222 aa).

The protein belongs to the herpesviridae US22 family. Interacts with UL25. Interacts with ISGylation machinery components ISG15, UBA7 and HERC5; these interactions inhibit global protein ISGylation. Post-translationally, ISGylated; ISGylation regulates UL26 stability and inhibits its activities to suppress NF-kappa-B signaling.

It is found in the virion tegument. It localises to the host nucleus. Plays a role in the inhibition of host NF-kappa-B. This inhibition affects both the canonical and the non-canonical pathways. Blocks the induction of host IKK phosphorylation. May also influence the normal phosphorylation state of several tegument proteins including pp28 in virions. Also suppresses virus-induced ISGylation independent of its own ISGylation. This chain is Tegument protein UL26 (UL26), found in Homo sapiens (Human).